The chain runs to 337 residues: Ribosomal RNA small subunit methyltransferase H (337 aa).

Residues glycine 36–histidine 38, aspartate 56, phenylalanine 82, aspartate 100, and glutamine 107 each bind S-adenosyl-L-methionine. A disordered region spans residues arginine 317–arginine 337.

The protein belongs to the methyltransferase superfamily. RsmH family.

Its subcellular location is the cytoplasm. It carries out the reaction cytidine(1402) in 16S rRNA + S-adenosyl-L-methionine = N(4)-methylcytidine(1402) in 16S rRNA + S-adenosyl-L-homocysteine + H(+). Functionally, specifically methylates the N4 position of cytidine in position 1402 (C1402) of 16S rRNA. In Xanthomonas oryzae pv. oryzae (strain KACC10331 / KXO85), this protein is Ribosomal RNA small subunit methyltransferase H.